The following is an 819-amino-acid chain: Molybdenum cofactor sulfurase (819 aa).

An N6-(pyridoxal phosphate)lysine modification is found at Lys271. Residue Cys430 is part of the active site. One can recognise an MOSC domain in the interval 650 to 817; the sequence is CKLLRYSSST…IGVGEEVNPD (168 aa).

This sequence belongs to the class-V pyridoxal-phosphate-dependent aminotransferase family. MOCOS subfamily. Pyridoxal 5'-phosphate is required as a cofactor. In terms of tissue distribution, ubiquitously expressed.

It carries out the reaction Mo-molybdopterin + L-cysteine + AH2 = thio-Mo-molybdopterin + L-alanine + A + H2O. It functions in the pathway cofactor biosynthesis; molybdopterin biosynthesis. Its function is as follows. Sulfurates the molybdenum cofactor. Sulfation of molybdenum is essential for xanthine dehydrogenase (XDH) and aldehyde oxidase (ADO) enzymes in which molybdenum cofactor is liganded by 1 oxygen and 1 sulfur atom in active form. Modulates cold stress- and osmotic stress-responsive gene expression by acting as key regulator of abscisic acid (ABA) biosynthesis. This is Molybdenum cofactor sulfurase (ABA3) from Arabidopsis thaliana (Mouse-ear cress).